We begin with the raw amino-acid sequence, 278 residues long: Large ribosomal subunit protein uL2 (278 aa).

The segment covering 210-219 has biased composition (basic residues); that stretch reads RKRWLGKRPQ. Residues 210-278 form a disordered region; sequence RKRWLGKRPQ…LIIRHRKGSK (69 aa). Positions 258 to 270 are enriched in basic and acidic residues; sequence KTRDVKKASEKLI.

This sequence belongs to the universal ribosomal protein uL2 family. In terms of assembly, part of the 50S ribosomal subunit. Forms a bridge to the 30S subunit in the 70S ribosome.

Its function is as follows. One of the primary rRNA binding proteins. Required for association of the 30S and 50S subunits to form the 70S ribosome, for tRNA binding and peptide bond formation. It has been suggested to have peptidyltransferase activity; this is somewhat controversial. Makes several contacts with the 16S rRNA in the 70S ribosome. The sequence is that of Large ribosomal subunit protein uL2 from Lactobacillus acidophilus (strain ATCC 700396 / NCK56 / N2 / NCFM).